The primary structure comprises 147 residues: Diuretic hormone 45 (147 aa).

The signal sequence occupies residues 1–26 (MMWWAVWCAAMVAGSVFTAAAPPTDS). The propeptide occupies 27-84 (IDLMQMDPSLADDESLGFAMQSLSGRYAAAPWLYLLADVSHDPQRMAEFSQSSGRARP). Residue valine 131 is modified to Valine amide. A propeptide spanning residues 135 to 147 (GAWGEPASYLYNN) is cleaved from the precursor.

Belongs to the sauvagine/corticotropin-releasing factor/urotensin I family.

It localises to the secreted. Its function is as follows. Regulation of fluid secretion. The chain is Diuretic hormone 45 (dh45) from Bombyx mori (Silk moth).